The chain runs to 188 residues: Ion-translocating oxidoreductase complex subunit B (188 aa).

The segment at 1-26 (MNGVFLAIGALLPICLAGGALLGYAA) is hydrophobic. One can recognise a 4Fe-4S domain in the interval 32-90 (QGDPVAEQVNALLPQTQCGQCGYPGCKPYAEAIAAGDKINKCPPGGEATIRALADLLDL). Positions 49, 52, 57, 73, 113, 116, 119, 123, 143, 146, 149, and 153 each coordinate [4Fe-4S] cluster. 2 4Fe-4S ferredoxin-type domains span residues 104–133 (RVAY…GAAR) and 134–163 (LMHT…MRET).

It belongs to the 4Fe4S bacterial-type ferredoxin family. RnfB subfamily. As to quaternary structure, the complex is composed of six subunits: RnfA, RnfB, RnfC, RnfD, RnfE and RnfG. The cofactor is [4Fe-4S] cluster.

It is found in the cell inner membrane. Its function is as follows. Part of a membrane-bound complex that couples electron transfer with translocation of ions across the membrane. In Pseudomonas aeruginosa (strain UCBPP-PA14), this protein is Ion-translocating oxidoreductase complex subunit B.